Consider the following 1461-residue polypeptide: Regulation of nuclear pre-mRNA domain-containing protein 2 (1461 aa).

Position 2 is an N-acetylalanine (A2). S16 carries the post-translational modification Phosphoserine. One can recognise a CID domain in the interval 19 to 149 (SAGALESSLD…ALREALSTTF (131 aa)). Disordered regions lie at residues 311–438 (STLP…TSLS) and 469–504 (NTGVSPASRPSPGTPTSPSNLTSGLKTPAPATTTSH). Over residues 352 to 368 (ESEKSATPEPVTDNRDV) the composition is skewed to basic and acidic residues. S356 bears the Phosphoserine mark. At T358 the chain carries Phosphothreonine. The span at 369 to 378 (EDMELSDVED) shows a compositional bias: acidic residues. Phosphoserine is present on S374. Positions 379–394 (DGSKIIVEDRKEKPAE) are enriched in basic and acidic residues. Positions 397–416 (AVSTSVPTKPTENISKASSC) are enriched in polar residues. Composition is skewed to low complexity over residues 417–426 (TPVPVTMTAT) and 473–491 (SPASRPSPGTPTSPSNLTS). S473, S476, and S479 each carry phosphoserine. Residue T482 is modified to Phosphothreonine. Phosphoserine is present on S485. Residue T517 is modified to Phosphothreonine. Residues 547-623 (TGNPVPASEA…SPGLPSTTFK (77 aa)) form a disordered region. Residues 553–566 (ASEAASQSTSASPA) show a composition bias toward low complexity. A Phosphoserine modification is found at S564. The span at 567–583 (NTTVSTIKGRNLPSSAQ) shows a compositional bias: polar residues. S593 is modified (phosphoserine). A compositionally biased stretch (low complexity) spans 593-614 (SPNSSTSEVSSTSASKASIGQS). T598 is subject to Phosphothreonine. 4 positions are modified to phosphoserine: S614, S663, S665, and S716. Disordered stretches follow at residues 696–849 (GSSA…MMNL), 900–997 (SENC…EKVL), 1016–1102 (ASRK…SGEP), 1132–1312 (STSG…APPL), and 1340–1461 (FGVL…PPRY). T723 is modified (phosphothreonine). S730 carries the post-translational modification Phosphoserine. T732 carries the phosphothreonine modification. Residues 742-752 (PTSSSVDTMSL) are compositionally biased toward polar residues. Phosphoserine is present on residues S758 and S762. Residues 758 to 768 (SPGSSTPSSTR) are compositionally biased toward low complexity. T763 is modified (phosphothreonine). Phosphoserine occurs at positions 769, 817, 826, 900, 909, 928, 965, and 976. Positions 927–954 (RSPSPSKNDSFFTPDSNHNSLSQSTTGH) are enriched in polar residues. Positions 1031 to 1055 (SKGTPSDGVSLSNLTQPSLTATDQQ) are enriched in polar residues. Phosphoserine is present on residues S1068 and S1099. The span at 1141-1150 (GPSSASELAS) shows a compositional bias: low complexity. Residues 1151–1160 (LGGGGSGGLT) show a composition bias toward gly residues. Residues 1174-1189 (FQESVGSFRSNSFNST) show a composition bias toward polar residues. 2 stretches are compositionally biased toward pro residues: residues 1267 to 1277 (FPTPPPPPPPG) and 1290 to 1299 (STPPPPPPPV). R1366 carries the post-translational modification Asymmetric dimethylarginine. A compositionally biased stretch (gly residues) spans 1382–1391 (PHGGGGGGGS). The span at 1417–1434 (PRPDFRPREPFLSRDPFH) shows a compositional bias: basic and acidic residues. Residues R1424 and R1430 each carry the asymmetric dimethylarginine modification.

As to quaternary structure, associates with the RNA polymerase II complex.

This chain is Regulation of nuclear pre-mRNA domain-containing protein 2 (RPRD2), found in Homo sapiens (Human).